The following is a 558-amino-acid chain: MSIVLFLIVFILLSLIVSRYLYSVALNVPSKIDVVFNPIEKLIYRLIGTNLEHMSGKTYIKHFLLFNGLMGGLSFVLLLIQQWLFLNPNHNLNQSVSLAFNTMASFLTNTNLQHYAGETGLSYLTQMCVITFLMFTSAASGYAVCIAMLRRLTGMTDVIGNFYQDITRFIVRVLIPFALIISLFLISQGTPQTLKGNLVIETLSGVKQTIAYGPMASLESIKHLGTNGGGFLGANSSTPFENPTYWSNYAEALSMMLIPGSLVFLFGRMLKTKQQIHPHAIMIFVAMFVMFIGFLVTCLYFEFAGNPELHHLGIAGGNMEGKETRFGIGLSALFTTITTAFTTGTVNNMHDSLTPLGGMVPMVLMMLNAVFGGEGVGLMNMLIYVMLTVFICSLMIGKTPSYLGMKIEGKEMKLIALSFLVHPLLILVFSALAFIVPGASDALTNPQFHGVSQVLYEFTSSSANNGSGFEGLGDNTVFWNISTGIVMLLARYIPIVLQILIVSSLVNKKTYQQHTQDVPINNLFFSSVLIIFIILLSGLTFLPDLMLGPIGEQLLLHV.

Helical transmembrane passes span 1-21 (MSIV…SRYL), 60-80 (IKHF…LLLI), 129-149 (VITF…IAML), 169-189 (FIVR…ISQG), 246-266 (WSNY…VFLF), 281-301 (IMIF…CLYF), 326-346 (FGIG…TGTV), 353-373 (LTPL…VFGG), 376-396 (VGLM…SLMI), 415-435 (IALS…LAFI), 485-505 (IVML…VSSL), and 523-543 (LFFS…TFLP).

Belongs to the KdpA family. In terms of assembly, the system is composed of three essential subunits: KdpA, KdpB and KdpC.

The protein resides in the cell membrane. Functionally, part of the high-affinity ATP-driven potassium transport (or Kdp) system, which catalyzes the hydrolysis of ATP coupled with the electrogenic transport of potassium into the cytoplasm. This subunit binds the extracellular potassium ions and delivers the ions to the membrane domain of KdpB through an intramembrane tunnel. The polypeptide is Potassium-transporting ATPase potassium-binding subunit (Staphylococcus haemolyticus (strain JCSC1435)).